Reading from the N-terminus, the 509-residue chain is Ribonuclease Y (509 aa).

The helical transmembrane segment at 3–23 (IIFSSIFAGFILGFLIRVFLG) threads the bilayer. The region spanning 197 to 257 (TVASVELPND…IRKELAKRTL (61 aa)) is the KH domain. The 96-residue stretch at 323 to 418 (VLSHSKETAI…VQIADAISAS (96 aa)) folds into the HD domain.

The protein belongs to the RNase Y family.

Its subcellular location is the cell membrane. Its function is as follows. Endoribonuclease that initiates mRNA decay. The protein is Ribonuclease Y of Borreliella afzelii (strain PKo) (Borrelia afzelii).